A 417-amino-acid polypeptide reads, in one-letter code: MQTYLVGGAVRDYLLGLPVKDRDWVVVGADAQTMLAQGFQPVGKDFPVFLHPETHEEYALARTERKTAKGYVGFSFHADKDVTLEQDLMRRDLTINAMAQDADGKIIDPFGGQRDLAAGILRHVSPAFAEDPVRILRTARFAARYKFEIAEETIKLMRQMVENGEADALVAERVWQEFAKGLMEKNPRKMIEVLRECGALKVLLPEVNALFGVPQRADYHPEIDSGIHTLMTLQRAADMGLSLPERYAALLHDLGKAKTPSDILPRHHGHDLAGVEPVRKVNQRLRAPKHCAELAELVCRWHIIFHQVGQLKSQTILNVLKKTDAFRRPERFQTALNVCIADTQGRLNREHTPYPQRAHWLALLEAANQADSGKIAAECRSQGKAHLIAEQIDRARLAQIAPLQKAFRAAQDKTEKH.

Positions 8 and 11 each coordinate ATP. CTP contacts are provided by Gly8 and Arg11. Asp21 and Asp23 together coordinate Mg(2+). Positions 91, 137, and 140 each coordinate ATP. Arg91, Arg137, and Arg140 together coordinate CTP. In terms of domain architecture, HD spans 225–326 (SGIHTLMTLQ…LNVLKKTDAF (102 aa)).

This sequence belongs to the tRNA nucleotidyltransferase/poly(A) polymerase family. Bacterial CCA-adding enzyme type 1 subfamily. As to quaternary structure, monomer. Can also form homodimers and oligomers. The cofactor is Mg(2+). Ni(2+) is required as a cofactor.

The enzyme catalyses a tRNA precursor + 2 CTP + ATP = a tRNA with a 3' CCA end + 3 diphosphate. The catalysed reaction is a tRNA with a 3' CCA end + 2 CTP + ATP = a tRNA with a 3' CCACCA end + 3 diphosphate. In terms of biological role, catalyzes the addition and repair of the essential 3'-terminal CCA sequence in tRNAs without using a nucleic acid template. Adds these three nucleotides in the order of C, C, and A to the tRNA nucleotide-73, using CTP and ATP as substrates and producing inorganic pyrophosphate. tRNA 3'-terminal CCA addition is required both for tRNA processing and repair. Also involved in tRNA surveillance by mediating tandem CCA addition to generate a CCACCA at the 3' terminus of unstable tRNAs. While stable tRNAs receive only 3'-terminal CCA, unstable tRNAs are marked with CCACCA and rapidly degraded. This chain is Multifunctional CCA protein, found in Neisseria meningitidis serogroup A / serotype 4A (strain DSM 15465 / Z2491).